We begin with the raw amino-acid sequence, 96 residues long: uncharacterized protein (96 aa).

This is an uncharacterized protein from Saimiriine herpesvirus 2 (strain 11) (SaHV-2).